The primary structure comprises 664 residues: UV-stimulated scaffold protein A homolog (664 aa).

Residues 10–153 (KVIGLIEKAT…LKNTLKLKFP (144 aa)) form a VHS-like region. The stretch at 148 to 180 (LKLKFPDLQANAARIQRERQEREMKTKEILRNK) forms a coiled coil. Disordered regions lie at residues 330–350 (HGNE…DGKV) and 362–403 (MRTQ…GNSL). The span at 334-347 (ETNEEEEDIWEEDD) shows a compositional bias: acidic residues. Over residues 363–374 (RTQQSENSSLPS) the composition is skewed to polar residues. A compositionally biased stretch (basic and acidic residues) spans 377–387 (EAKKSTSEARS). A compositionally biased stretch (polar residues) spans 388-402 (NKVSNTKKVGSSGNS). The UVSSA-type zinc finger occupies 473 to 500 (TPPCRASLKKGGLCQRRDLRVCPFHGPI). Residues Cys-476, Cys-486, Cys-494, and His-497 each contribute to the Zn(2+) site. Disordered regions lie at residues 514–546 (SPLD…DPNQ) and 640–664 (VKGT…ANQW). Composition is skewed to polar residues over residues 521–533 (NQTS…NQDV) and 640–650 (VKGTNPQQLAQ).

Belongs to the UVSSA family.

Its subcellular location is the chromosome. The chain is UV-stimulated scaffold protein A homolog from Arabidopsis thaliana (Mouse-ear cress).